A 316-amino-acid chain; its full sequence is Ribosomal RNA small subunit methyltransferase H (316 aa).

Residues 35–37 (AGH), Asp55, Phe84, Asp105, and Gln112 each bind S-adenosyl-L-methionine.

The protein belongs to the methyltransferase superfamily. RsmH family.

The protein resides in the cytoplasm. It catalyses the reaction cytidine(1402) in 16S rRNA + S-adenosyl-L-methionine = N(4)-methylcytidine(1402) in 16S rRNA + S-adenosyl-L-homocysteine + H(+). Functionally, specifically methylates the N4 position of cytidine in position 1402 (C1402) of 16S rRNA. The polypeptide is Ribosomal RNA small subunit methyltransferase H (Streptococcus uberis (strain ATCC BAA-854 / 0140J)).